The primary structure comprises 164 residues: Ribosome-binding factor A (164 aa).

Residues A123–R164 form a disordered region. The span at G132–E149 shows a compositional bias: acidic residues. A compositionally biased stretch (pro residues) spans A155 to R164.

This sequence belongs to the RbfA family. In terms of assembly, monomer. Binds 30S ribosomal subunits, but not 50S ribosomal subunits or 70S ribosomes.

Its subcellular location is the cytoplasm. In terms of biological role, one of several proteins that assist in the late maturation steps of the functional core of the 30S ribosomal subunit. Associates with free 30S ribosomal subunits (but not with 30S subunits that are part of 70S ribosomes or polysomes). Required for efficient processing of 16S rRNA. May interact with the 5'-terminal helix region of 16S rRNA. The chain is Ribosome-binding factor A from Rhodospirillum rubrum (strain ATCC 11170 / ATH 1.1.1 / DSM 467 / LMG 4362 / NCIMB 8255 / S1).